The following is a 599-amino-acid chain: Elongation factor 4 (599 aa).

The tr-type G domain maps to 2–184 (KNIRNFSIIA…RLVRDIPPPQ (183 aa)). GTP-binding positions include 14-19 (DHGKST) and 131-134 (NKID).

Belongs to the TRAFAC class translation factor GTPase superfamily. Classic translation factor GTPase family. LepA subfamily.

The protein localises to the cell inner membrane. The catalysed reaction is GTP + H2O = GDP + phosphate + H(+). Functionally, required for accurate and efficient protein synthesis under certain stress conditions. May act as a fidelity factor of the translation reaction, by catalyzing a one-codon backward translocation of tRNAs on improperly translocated ribosomes. Back-translocation proceeds from a post-translocation (POST) complex to a pre-translocation (PRE) complex, thus giving elongation factor G a second chance to translocate the tRNAs correctly. Binds to ribosomes in a GTP-dependent manner. The polypeptide is Elongation factor 4 (Salmonella paratyphi A (strain ATCC 9150 / SARB42)).